We begin with the raw amino-acid sequence, 400 residues long: NADH-quinone oxidoreductase subunit D (400 aa).

It belongs to the complex I 49 kDa subunit family. NDH-1 is composed of 14 different subunits. Subunits NuoB, C, D, E, F, and G constitute the peripheral sector of the complex.

It localises to the cell inner membrane. The enzyme catalyses a quinone + NADH + 5 H(+)(in) = a quinol + NAD(+) + 4 H(+)(out). Its function is as follows. NDH-1 shuttles electrons from NADH, via FMN and iron-sulfur (Fe-S) centers, to quinones in the respiratory chain. The immediate electron acceptor for the enzyme in this species is believed to be a menaquinone. Couples the redox reaction to proton translocation (for every two electrons transferred, four hydrogen ions are translocated across the cytoplasmic membrane), and thus conserves the redox energy in a proton gradient. The sequence is that of NADH-quinone oxidoreductase subunit D from Chlorobaculum parvum (strain DSM 263 / NCIMB 8327) (Chlorobium vibrioforme subsp. thiosulfatophilum).